Reading from the N-terminus, the 1354-residue chain is Rho-associated protein kinase 1 (1354 aa).

An N-acetylserine modification is found at serine 2. A Protein kinase domain is found at 76 to 338 (YEVVKVIGRG…VEEIKRHLFF (263 aa)). Residues 82-90 (IGRGAFGEV) and lysine 105 contribute to the ATP site. Aspartate 198 functions as the Proton acceptor in the catalytic mechanism. The AGC-kinase C-terminal domain occupies 341 to 409 (DQWAWETLRD…YSNRRYLPSA (69 aa)). The segment at 368–727 (FDDLEEDKGD…KKLKEEREAR (360 aa)) is interaction with FHOD1. The stretch at 422-692 (KSLQESLQKT…RLEQEVNEHK (271 aa)) forms a coiled coil. Residues 479 to 556 (SAVSQIEKEK…LEEANDLLRT (78 aa)) form the REM-1 domain. The interval 707 to 946 (EAKSVAMCEM…TVSRLEETNS (240 aa)) is SHROOM3 binding. The RhoBD domain maps to 949–1015 (TKDIEMLRKE…LAEIMNRKDF (67 aa)). Residues 998-1010 (LKTQAVNKLAEIM) form an RHOA binding region. Positions 1011–1102 (NRKDFKIDRK…KLLDLSDSTS (92 aa)) form a coiled coil. Phosphoserine occurs at positions 1105 and 1108. Residues 1115–1354 (NLPESRIEGW…VVKNTSGKTS (240 aa)) are auto-inhibitory. One can recognise a PH domain in the interval 1118–1317 (ESRIEGWLSV…WVTHLVKKIP (200 aa)). The Phorbol-ester/DAG-type zinc finger occupies 1228-1283 (GHEFIPTLYHFPANCEACAKPLWHVFKPPPALECRRCHVKCHRDHLDKKEDLISPC). Serine 1328 carries the phosphoserine modification. The disordered stretch occupies residues 1333–1354 (STRSTANQSFRKVVKNTSGKTS).

The protein belongs to the protein kinase superfamily. AGC Ser/Thr protein kinase family. Homodimer. Interacts with RHOA (activated by GTP), RHOB, RHOC, GEM, MYLC2B, RHOE, PPP1R12A, LIMK1, LIMK2, TSG101, CHORDC1, DAPK3, PFN1 and JIP3. Interacts with FHOD1 in a Src-dependent manner. Interacts with PTEN. Interacts with ITGB1BP1 (via N-terminus and PTB domain). Interacts with SHROOM3. It depends on Mg(2+) as a cofactor. Autophosphorylated on serine and threonine residues. Post-translationally, cleaved by caspase-3 during apoptosis. This leads to constitutive activation of the kinase and membrane blebbing. As to expression, highly expressed in brain, heart, lung, liver, stomach, spleen, kidney, testis, muscle, embryo and placenta.

It localises to the cytoplasm. It is found in the cytoskeleton. The protein localises to the microtubule organizing center. The protein resides in the centrosome. Its subcellular location is the centriole. It localises to the golgi apparatus membrane. It is found in the cell projection. The protein localises to the bleb. The protein resides in the cell membrane. Its subcellular location is the lamellipodium. It localises to the ruffle. It carries out the reaction L-seryl-[protein] + ATP = O-phospho-L-seryl-[protein] + ADP + H(+). The enzyme catalyses L-threonyl-[protein] + ATP = O-phospho-L-threonyl-[protein] + ADP + H(+). With respect to regulation, activated by RHOA binding. Inhibited by Y-27632. Its function is as follows. Protein kinase which is a key regulator of the actin cytoskeleton and cell polarity. Involved in regulation of smooth muscle contraction, actin cytoskeleton organization, stress fiber and focal adhesion formation, neurite retraction, cell adhesion and motility via phosphorylation of DAPK3, GFAP, LIMK1, LIMK2, MYL9/MLC2, TPPP, PFN1 and PPP1R12A. Phosphorylates FHOD1 and acts synergistically with it to promote SRC-dependent non-apoptotic plasma membrane blebbing. Phosphorylates JIP3 and regulates the recruitment of JNK to JIP3 upon UVB-induced stress. Acts as a suppressor of inflammatory cell migration by regulating PTEN phosphorylation and stability. Acts as a negative regulator of VEGF-induced angiogenic endothelial cell activation. Required for centrosome positioning and centrosome-dependent exit from mitosis. Plays a role in terminal erythroid differentiation. Inhibits podocyte motility via regulation of actin cytoskeletal dynamics and phosphorylation of CFL1. Promotes keratinocyte terminal differentiation. Involved in osteoblast compaction through the fibronectin fibrillogenesis cell-mediated matrix assembly process, essential for osteoblast mineralization. May regulate closure of the eyelids and ventral body wall by inducing the assembly of actomyosin bundles. The protein is Rho-associated protein kinase 1 (Rock1) of Mus musculus (Mouse).